Here is a 273-residue protein sequence, read N- to C-terminus: Oxidized low-density lipoprotein receptor 1 (273 aa).

The interval 1 to 22 (MTFDDLKIQTVKDQPDEKSNGK) is disordered. The Cytoplasmic segment spans residues 1–36 (MTFDDLKIQTVKDQPDEKSNGKKAKGLQFLYSPWWC). S-palmitoyl cysteine attachment occurs at residues Cys-36 and Cys-46. A helical; Signal-anchor for type II membrane protein transmembrane segment spans residues 37–57 (LAAATLGVLCLGLVVTIMVLG). The interval 58–150 (MQLSQVSDLL…SAPCPQDWIW (93 aa)) is neck. Topologically, residues 58 to 273 (MQLSQVSDLL…CQKKANLRAQ (216 aa)) are extracellular. The stretch at 64–123 (SDLLTQEQANLTHQKKKLEGQISARQQAEEASQESENELKEMIETLARKLNEKSKEQMEL) forms a coiled coil. Residue Asn-73 is glycosylated (N-linked (GlcNAc...) asparagine). The N-linked (GlcNAc...) (complex) asparagine glycan is linked to Asn-139. 3 cysteine pairs are disulfide-bonded: Cys-144–Cys-155, Cys-172–Cys-264, and Cys-243–Cys-256. In terms of domain architecture, C-type lectin spans 151-265 (HGENCYLFSS…CILAAFSICQ (115 aa)).

As to quaternary structure, homodimer; disulfide-linked. May form a hexamer composed of 3 homodimers. Interacts with HSP70. (Microbial infection) Binds to the head and beginning of the coiled stalk of N.meningitidis adhesin A (nadA) variant 3; binding can be abrogated by monoclonal antibodies against the specific regions of NadA. Binding occurs in protein microarrays, in solution and when LOX-1 is expressed on the cell surface. Post-translationally, the intrachain disulfide-bonds prevent N-glycosylation at some sites. In terms of processing, N-glycosylated. Expressed at high level in endothelial cells and vascular-rich organs such as placenta, lung, liver and brain, aortic intima, bone marrow, spinal cord and substantia nigra. Also expressed at the surface of dendritic cells. Widely expressed at intermediate and low level.

The protein localises to the cell membrane. It is found in the membrane raft. The protein resides in the secreted. Its function is as follows. Receptor that mediates the recognition, internalization and degradation of oxidatively modified low density lipoprotein (oxLDL) by vascular endothelial cells. OxLDL is a marker of atherosclerosis that induces vascular endothelial cell activation and dysfunction, resulting in pro-inflammatory responses, pro-oxidative conditions and apoptosis. Its association with oxLDL induces the activation of NF-kappa-B through an increased production of intracellular reactive oxygen and a variety of pro-atherogenic cellular responses including a reduction of nitric oxide (NO) release, monocyte adhesion and apoptosis. In addition to binding oxLDL, it acts as a receptor for the HSP70 protein involved in antigen cross-presentation to naive T-cells in dendritic cells, thereby participating in cell-mediated antigen cross-presentation. Also involved in inflammatory process, by acting as a leukocyte-adhesion molecule at the vascular interface in endotoxin-induced inflammation. Also acts as a receptor for advanced glycation end (AGE) products, activated platelets, monocytes, apoptotic cells and both Gram-negative and Gram-positive bacteria. In terms of biological role, (Microbial infection) May serve as a receptor for adhesin A variant 3 (nadA) of N.meningitidis. The polypeptide is Oxidized low-density lipoprotein receptor 1 (OLR1) (Homo sapiens (Human)).